A 317-amino-acid polypeptide reads, in one-letter code: MLSRLLRDDKLLEVFFSSLDMKKSYLLALSGGSDSLFLLYLLKSRGVAFTAVHVDHGWRESSYREAEELKIRCEEEGIPILIDHVPPEYRTSRDPENAARRYRYTLFHKVCKEQNLAGIFLAHHANDQAETVLKRLLEGASLSNLKGMSPKTSYEDIPLFRPLLHIPKQIIINVLDAENVPCVQDITNTDERYLRARMRKKIFPWLEEIFGKNITQPLLTLAQDSEELSCYMKQQAEPFLENMRKENTTWSIEIPQVLIEQVFLTKWVCKEFFFRAGVVASRHFLQTVYDHLQRKLPAQMRLRDKRVIIKAGVVMIE.

An ATP-binding site is contributed by 30 to 35 (SGGSDS).

The protein belongs to the tRNA(Ile)-lysidine synthase family.

It is found in the cytoplasm. It catalyses the reaction cytidine(34) in tRNA(Ile2) + L-lysine + ATP = lysidine(34) in tRNA(Ile2) + AMP + diphosphate + H(+). Ligates lysine onto the cytidine present at position 34 of the AUA codon-specific tRNA(Ile) that contains the anticodon CAU, in an ATP-dependent manner. Cytidine is converted to lysidine, thus changing the amino acid specificity of the tRNA from methionine to isoleucine. The sequence is that of tRNA(Ile)-lysidine synthase from Chlamydia caviae (strain ATCC VR-813 / DSM 19441 / 03DC25 / GPIC) (Chlamydophila caviae).